Here is a 284-residue protein sequence, read N- to C-terminus: L-ribulose-5-phosphate 3-epimerase UlaE (284 aa).

This sequence belongs to the L-ribulose-5-phosphate 3-epimerase family.

It catalyses the reaction L-ribulose 5-phosphate = L-xylulose 5-phosphate. The protein operates within cofactor degradation; L-ascorbate degradation; D-xylulose 5-phosphate from L-ascorbate: step 3/4. Functionally, catalyzes the isomerization of L-xylulose-5-phosphate to L-ribulose-5-phosphate. Is involved in the anaerobic L-ascorbate utilization. The protein is L-ribulose-5-phosphate 3-epimerase UlaE of Escherichia coli O157:H7 (strain EC4115 / EHEC).